Consider the following 443-residue polypeptide: Ribosomal protein uS12 methylthiotransferase RimO (443 aa).

The 111-residue stretch at 10 to 120 (PRVGFVSLGC…VMAAVHAQCP (111 aa)) folds into the MTTase N-terminal domain. Residues Cys19, Cys55, Cys84, Cys152, Cys156, and Cys159 each coordinate [4Fe-4S] cluster. Positions 138–375 (LTPRHYAYLK…MALQAEISAR (238 aa)) constitute a Radical SAM core domain. In terms of domain architecture, TRAM spans 378–443 (ARRVGTECTV…DEHDLYGRVL (66 aa)).

It belongs to the methylthiotransferase family. RimO subfamily. [4Fe-4S] cluster is required as a cofactor.

Its subcellular location is the cytoplasm. It carries out the reaction L-aspartate(89)-[ribosomal protein uS12]-hydrogen + (sulfur carrier)-SH + AH2 + 2 S-adenosyl-L-methionine = 3-methylsulfanyl-L-aspartate(89)-[ribosomal protein uS12]-hydrogen + (sulfur carrier)-H + 5'-deoxyadenosine + L-methionine + A + S-adenosyl-L-homocysteine + 2 H(+). Catalyzes the methylthiolation of an aspartic acid residue of ribosomal protein uS12. This chain is Ribosomal protein uS12 methylthiotransferase RimO, found in Alkalilimnicola ehrlichii (strain ATCC BAA-1101 / DSM 17681 / MLHE-1).